Here is a 105-residue protein sequence, read N- to C-terminus: Nucleoid-associated protein Lm4b_02677 (105 aa).

The span at 1–16 shows a compositional bias: low complexity; it reads MRGMGNMQGMMKQMQK. Residues 1–23 are disordered; the sequence is MRGMGNMQGMMKQMQKMQKEMAK.

It belongs to the YbaB/EbfC family. Homodimer.

The protein localises to the cytoplasm. The protein resides in the nucleoid. Binds to DNA and alters its conformation. May be involved in regulation of gene expression, nucleoid organization and DNA protection. This Listeria monocytogenes serotype 4b (strain CLIP80459) protein is Nucleoid-associated protein Lm4b_02677.